Reading from the N-terminus, the 850-residue chain is MYLYIETLKQRLDAINQLRVDRALAAMGPAFQKVYSLLPILLHCHHPQMPGYLDGNVPHGVCLFTPNEIQQDYLADVEARWGEPLAPSAGGELPITGVYSMGSTSSIGQCHTSDLDIWVCHQAWLDTEERNQLQQKCSLLEKWAASMGVEVSFFLVDENRFRHNASGSLGGEDCGSTQHILLLDEFYRSAVRLAGKRILWNMVPVKEEEHYDDYVLSLYAQGVLTPNEWLDLGGLSTLSAEEYFGASLWQLYKSIDSPYKAVLKTLLLEAYSWEYPNSQLLAMEIKQHLHAGEIVSFGLDAYCMMLDRVTRYLIQINDTTRLNLVRRCFYLKVCEKLSRTPASTGWRREVLSQLVSEWGWSNEKLAVLDNRANWKIERVREAHNELLDAMMQSYRNLIRFARRNNLSVSASPQDIGVLTRKLYAAFEALPGKVTLVNPQISPDLSEEHLTFIHVPAGRANRPGWYLYNQAPSMDAIVSHQPLEYNRYLNKLVSWAYFNGLLTSKTHLHIKSANLCDTVKLQELVTDISHHFPLRLAAPTPKALYSPCEIRHLAIIVNLEHDPTTTFRNQVVHFDFRKLDVFSFGEQQQCLVGSIDLLYRNSWNEVRTLHFSGEQAVLEALKTILGKMHQDAAPPESVDVFCYSQHLRGLIRTRIQQLVSECIDLRLSSTRQEPGRFKAVRVSGQTWGLFFERLSVSVQKLENAVEFYGAISNNKLHGLSVQVETNQIHLPPVVDGFASEGIIQFFFEGTADEKGFNIYILDEANRVEVYHHCEGSKEELVRDVSRFYSSSHDRFTYGSSFINFNLPQFYQIVQLDGRTQVIPFRSNTLSQLCANIAEKEASLPTKQCQLH.

The segment at 1–535 is catalytic; the sequence is MYLYIETLKQ…DISHHFPLRL (535 aa). A regulatory region spans residues 541–850; it reads KALYSPCEIR…SLPTKQCQLH (310 aa).

It belongs to the adenylyl cyclase class-1 family.

It localises to the cytoplasm. It catalyses the reaction ATP = 3',5'-cyclic AMP + diphosphate. With respect to regulation, the regulatory domain is involved in the regulation of cyclase activity by the carbon source. The protein is Adenylate cyclase (cya) of Yersinia pestis.